A 337-amino-acid polypeptide reads, in one-letter code: Regulator of RpoS (337 aa).

In terms of domain architecture, Response regulatory spans 9-123 (QILIVEDEQV…NRLREMVFAC (115 aa)). A 4-aspartylphosphate modification is found at D58.

The protein belongs to the RssB family. In terms of assembly, binds to RpoS. Phosphorylated. Phosphorylation stimulates the interaction with RpoS and, therefore, the proteolysis of RpoS.

Functionally, regulates the turnover of the sigma S factor (RpoS) by promoting its proteolysis in exponentially growing cells. Acts by binding and delivering RpoS to the ClpXP protease. RssB is not co-degraded with RpoS, but is released from the complex and can initiate a new cycle of RpoS recognition and degradation. This chain is Regulator of RpoS, found in Shigella flexneri.